A 660-amino-acid chain; its full sequence is Bifunctional polymyxin resistance protein ArnA (660 aa).

A formyltransferase ArnAFT region spans residues 1-304 (MKTVVFAYHD…TLGLVQGSRL (304 aa)). 86–88 (HLI) provides a ligand contact to (6R)-10-formyltetrahydrofolate. Histidine 104 serves as the catalytic Proton donor; for formyltransferase activity. (6R)-10-formyltetrahydrofolate is bound by residues arginine 114 and 136-140 (VKRAD). The dehydrogenase ArnADH stretch occupies residues 314-660 (RRTRVLILGV…RTVDLTDKPS (347 aa)). NAD(+) contacts are provided by residues aspartate 347 and 368–369 (DI). UDP-alpha-D-glucuronate is bound by residues alanine 393, tyrosine 398, and 432-433 (TS). The Proton acceptor; for decarboxylase activity role is filled by glutamate 434. Residues arginine 460, asparagine 492, 526 to 535 (KLIDGGKQKR), and tyrosine 613 each bind UDP-alpha-D-glucuronate. Arginine 619 acts as the Proton donor; for decarboxylase activity in catalysis.

It in the N-terminal section; belongs to the Fmt family. UDP-L-Ara4N formyltransferase subfamily. This sequence in the C-terminal section; belongs to the NAD(P)-dependent epimerase/dehydratase family. UDP-glucuronic acid decarboxylase subfamily. Homohexamer, formed by a dimer of trimers.

The catalysed reaction is UDP-alpha-D-glucuronate + NAD(+) = UDP-beta-L-threo-pentopyranos-4-ulose + CO2 + NADH. It carries out the reaction UDP-4-amino-4-deoxy-beta-L-arabinose + (6R)-10-formyltetrahydrofolate = UDP-4-deoxy-4-formamido-beta-L-arabinose + (6S)-5,6,7,8-tetrahydrofolate + H(+). The protein operates within nucleotide-sugar biosynthesis; UDP-4-deoxy-4-formamido-beta-L-arabinose biosynthesis; UDP-4-deoxy-4-formamido-beta-L-arabinose from UDP-alpha-D-glucuronate: step 1/3. It functions in the pathway nucleotide-sugar biosynthesis; UDP-4-deoxy-4-formamido-beta-L-arabinose biosynthesis; UDP-4-deoxy-4-formamido-beta-L-arabinose from UDP-alpha-D-glucuronate: step 3/3. Its pathway is bacterial outer membrane biogenesis; lipopolysaccharide biosynthesis. Its function is as follows. Bifunctional enzyme that catalyzes the oxidative decarboxylation of UDP-glucuronic acid (UDP-GlcUA) to UDP-4-keto-arabinose (UDP-Ara4O) and the addition of a formyl group to UDP-4-amino-4-deoxy-L-arabinose (UDP-L-Ara4N) to form UDP-L-4-formamido-arabinose (UDP-L-Ara4FN). The modified arabinose is attached to lipid A and is required for resistance to polymyxin and cationic antimicrobial peptides. In Escherichia coli O1:K1 / APEC, this protein is Bifunctional polymyxin resistance protein ArnA.